The primary structure comprises 451 residues: Tetraspanin-14 (451 aa).

The Cytoplasmic portion of the chain corresponds to 1 to 56; the sequence is MPHRAPRRFMKTAPGACDWEQCLLMGSGEPTRARAVVSSSHKQRKPRQEISACLKW. Residues 20-24 carry the Basolateral membrane targeting motif; the sequence is EQCLL. Residues 57–77 form a helical membrane-spanning segment; sequence LVFLLNSIVFLVGVGILALGV. Topologically, residues 78 to 96 are extracellular; the sequence is YLFIKDFREVKLVDIILNP. A helical membrane pass occupies residues 97–117; that stretch reads AILISIFGFSICVVSFFGFMG. The Cytoplasmic segment spans residues 118-130; it reads ALRDNIFLLKCFA. Residues 131-151 form a helical membrane-spanning segment; that stretch reads ACVFLSYILVVAVTLVFFTLF. Residues 152-285 lie on the Extracellular side of the membrane; it reads YTDTTEGLSA…QPLRTLFESH (134 aa). 2 N-linked (GlcNAc...) asparagine glycosylation sites follow: N205 and N211. The chain crosses the membrane as a helical span at residues 286–306; it reads AVHVGAFVALLIVPVCISVCL. Topologically, residues 307–451 are cytoplasmic; it reads TNILAKQVDH…TDLVPQKSKS (145 aa). A disordered region spans residues 328 to 451; sequence NDRRRKRDHN…TDLVPQKSKS (124 aa). Over residues 366–376 the composition is skewed to pro residues; it reads PDIPPPLPPIE. The span at 410-434 shows a compositional bias: low complexity; sequence ATTTRTPPAAAGPAPTPQATTTNRT. Residues 435–444 show a composition bias toward polar residues; that stretch reads HQWVLQQTDL.

The protein belongs to the tetraspanin (TM4SF) family. Expressed in the germline, particularly in sperm cells. As to expression, expressed in the germline (particularly in sperm cells), anterior sensory cilia, hypodermis and vulva (at protein level). In terms of tissue distribution, expressed in the pharynx, hypodermis and vulva (at protein level).

Its subcellular location is the cell membrane. It localises to the cytoplasmic vesicle membrane. It is found in the endosome membrane. The protein localises to the early endosome membrane. The protein resides in the late endosome membrane. Its subcellular location is the recycling endosome membrane. It localises to the apical cell membrane. It is found in the basolateral cell membrane. Functionally, functions redundantly with tsp-12 to regulate cell surface levels of the BMP type II receptor daf-4 (but not BMP type I receptor sma-6), probably by regulating endosomal sorting and recycling of receptors, preventing their targeting to degradative lysosomes. Together with tsp-12, regulates cell fate specification in the postembryonic mesodermal M lineage, body size, male development and vulva development, probably by positively modulating BMP-like Sma/Mab signaling. Together with tsp-12 involved in maintaining the structural and functional integrity of the endosomal network. Together with tsp-12, probably acts by modulating the activation of glp-1, Notch-like receptor, to regulate germline maturation. In terms of biological role, functions redundantly with tsp-12 to regulate cell fate specification in the postembryonic mesodermal M lineage, body size, embryonic and vulva development. Its function is as follows. Functions redundantly with tsp-12 to regulate cell fate specification in the postembryonic mesodermal M lineage. Likely plays a complementary role in mesodermal development with tsp-14 isoform a, but may be more critical. The protein is Tetraspanin-14 of Caenorhabditis elegans.